Here is a 189-residue protein sequence, read N- to C-terminus: MTDKTEKVAVDPETVFKRPRECDSPSYQKRQRMALLARKQGAGDSLIAGSAMSKEKKLMTGHAIPPSQLDSQIDDFTGFSKDGMMQKPGSNAPVGGNVTSNFSGDDLECRGIASSPKSQQEINADIKCQVVKEIRCLGRKYEKIFEMLEGVQGPTAVRKRFFESIIKEAARCMRRDFVKHLKKKLKRMI.

It belongs to the CT45 family.

It localises to the nucleus. The polypeptide is Cancer/testis antigen family 45 member A10 (Homo sapiens (Human)).